The primary structure comprises 131 residues: Large ribosomal subunit protein bL17 (131 aa).

It belongs to the bacterial ribosomal protein bL17 family. In terms of assembly, part of the 50S ribosomal subunit. Contacts protein L32.

This chain is Large ribosomal subunit protein bL17, found in Methylobacillus flagellatus (strain ATCC 51484 / DSM 6875 / VKM B-1610 / KT).